A 333-amino-acid polypeptide reads, in one-letter code: DNA-directed RNA polymerase subunit alpha (333 aa).

An alpha N-terminal domain (alpha-NTD) region spans residues 1–233 (MVREKVRVST…DLFIPFLHAE (233 aa)). An alpha C-terminal domain (alpha-CTD) region spans residues 266 to 333 (KKEIAFKSIF…DILEIEKHFP (68 aa)).

The protein belongs to the RNA polymerase alpha chain family. In terms of assembly, in plastids the minimal PEP RNA polymerase catalytic core is composed of four subunits: alpha, beta, beta', and beta''. When a (nuclear-encoded) sigma factor is associated with the core the holoenzyme is formed, which can initiate transcription.

Its subcellular location is the plastid. It localises to the chloroplast. It carries out the reaction RNA(n) + a ribonucleoside 5'-triphosphate = RNA(n+1) + diphosphate. Its function is as follows. DNA-dependent RNA polymerase catalyzes the transcription of DNA into RNA using the four ribonucleoside triphosphates as substrates. The protein is DNA-directed RNA polymerase subunit alpha of Lotus japonicus (Lotus corniculatus var. japonicus).